A 647-amino-acid polypeptide reads, in one-letter code: Protein INVOLVED IN DE NOVO 2 (647 aa).

2 disordered regions span residues 1-20 (MGST…SESE) and 101-123 (SASE…DCDH). Residues 9-20 (SDDEDSDISESE) show a composition bias toward acidic residues. Residues 253–508 (IAELTEEEAR…NIMKEWNTNI (256 aa)) adopt a coiled-coil conformation.

In terms of assembly, interacts with FMD1/IDNL1. Forms a complex with FMD1/IDNL1 and FMD2/INDL2. Can form homodimers. Interacts with MORC6.

Its function is as follows. Forms a complex with FDM1/IDNL1 and FDM2/IDNL2 that is required for RNA-directed DNA methylation (RdDM) and that functions at a downstream step of the RdDM pathway and downstream of small interfering RNA (siRNA) formation. Required for de novo DNA methylation, siRNA accumulation and siRNA-mediated maintenance methylation. Required for several post-transcriptional gene silencing pathways. Binds double-stranded RNAs (dsRNAs) with 5'-overhangs through its XS domain. Binds long non-coding RNA (lncRNA) in an AGO4-dependent manner and associates with DRM2, resulting in DNA methylation of RdDM target loci. Mediates the silencing of a subset of MORC6 target loci. This Arabidopsis thaliana (Mouse-ear cress) protein is Protein INVOLVED IN DE NOVO 2.